The sequence spans 20 residues: Apidaecin 2+ (20 aa).

Over residues 1 to 13 (GKPNKPRPAPIKP) the composition is skewed to pro residues. Positions 1-20 (GKPNKPRPAPIKPRPPHPRL) are disordered.

It is found in the secreted. Functionally, antimicrobial peptide active against many Gram-negative enterobacterial and plant-associated bacterial species. Not active against other bacterial species like H.pylori, P.mirabilis, B.pertussis or N.gonorrhoeae. This chain is Apidaecin 2+, found in Pimpla disparis (Parasitic wasp).